Consider the following 268-residue polypeptide: Zinc finger protein SNAI2 (268 aa).

The tract at residues 1–20 (MPRSFLVKKHFNASKKPNYS) is SNAG domain. The disordered stretch occupies residues 80–117 (PASLGRVSPPPPSDTSSKDHSGSESPISDEEERLQSKL). 4 consecutive C2H2-type zinc fingers follow at residues 128–150 (FQCN…KQLH), 159–181 (FSCK…IRTH), 185–207 (CVCK…IRTH), and 213–235 (FSCS…LQTH). Residues 241–264 (YQCKSCSKTFSRMSLLHKHEESGC) form a C2H2-type 5; atypical zinc finger.

This sequence belongs to the snail C2H2-type zinc-finger protein family. In terms of assembly, interacts (via SNAG domain) with LIMD1 (via LIM domains), WTIP (via LIM domains) and AJUBA (via LIM domains). Interacts (via zinc fingers) with KPNA2, KPNB1, and TNPO1. May interact (via zinc fingers) with IPO7. In terms of processing, phosphorylated by GSK3B. Once phosphorylated, it becomes a target for ubiquitination. Post-translationally, ubiquitinated by the SCF(FBXO11) complex; ubiquitination requires previous GSK3B-mediated SNAI2 phosphorylation.

The protein localises to the nucleus. The protein resides in the cytoplasm. Functionally, transcriptional repressor that modulates both activator-dependent and basal transcription. Involved in the generation and migration of neural crest cells. Plays a role in mediating RAF1-induced transcriptional repression of the TJ protein, occludin (OCLN) and subsequent oncogenic transformation of epithelial cells. Represses BRCA2 expression by binding to its E2-box-containing silencer and recruiting CTBP1 and HDAC1 in breast cells. In epidermal keratinocytes, binds to the E-box in ITGA3 promoter and represses its transcription. Involved in the regulation of ITGB1 and ITGB4 expression and cell adhesion and proliferation in epidermal keratinocytes. Binds to E-box2 domain of BSG and activates its expression during TGFB1-induced epithelial-mesenchymal transition (EMT) in hepatocytes. Represses E-Cadherin/CDH1 transcription via E-box elements. Involved in osteoblast maturation. Binds to RUNX2 and SOC9 promoters and may act as a positive and negative transcription regulator, respectively, in osteoblasts. Binds to CXCL12 promoter via E-box regions in mesenchymal stem cells and osteoblasts. Plays an essential role in TWIST1-induced EMT and its ability to promote invasion and metastasis. The polypeptide is Zinc finger protein SNAI2 (SNAI2) (Bos taurus (Bovine)).